We begin with the raw amino-acid sequence, 459 residues long: MIKHFLEDNSDDAELSKFVKDFPGSEPCHPTESKTRVARPQILEPRPQSPDLCDDDVEFRATLWSQPSDSQQYFCPPAPLSPSSRPRSPWGKLDPYDSSEDDKEYVGFATLPNQVHRKSVKKGFDFTLMVAGESGLGKSTLVNSLFLTDLYRDRKLLGAEERIMQTVEITKHAVDIEEKGVRLRLTIVDTPGFGDAVNNTECWRPVAEYIDQQFEQYFRDESGLNRKNIQDNRVHCCLYFISPFGHGLRPLDVEFMKALHQRVNIVPILAKADTLTPSEVDRKKCKIREEIEHFGIKIYQFPDCDSDEDEDFKLQDQALKESIPFAVIGSNTVVEARGRRVRGRLYPWGIVEVENPGHCDFVKLRTMLVRTHMQDLKDVTRETHYENYRAQCIQSMTRLVVKERNRNKLTRESGTDFPIPAVPPGTDPETEKLIREKDEELRRMQEMLHKIQRQMKETH.

Phosphoserine occurs at positions 10, 49, 98, and 99. Disordered regions lie at residues 18 to 52 (FVKD…SPDL) and 70 to 98 (SQQY…PYDS). Positions 122-395 (KGFDFTLMVA…ENYRAQCIQS (274 aa)) constitute a Septin-type G domain. The G1 motif stretch occupies residues 132-139 (GESGLGKS). Residues 132–139 (GESGLGKS) and T166 contribute to the GTP site. Residues 189 to 192 (DTPG) are G3 motif. Residues 270–273 (AKAD) form a G4 motif region. A GTP-binding site is contributed by 271–279 (KADTLTPSE). S306 is subject to Phosphoserine. GTP-binding residues include G329 and R344. Residues 410–430 (TRESGTDFPIPAVPPGTDPET) are disordered. S413 bears the Phosphoserine mark. T415 carries the post-translational modification Phosphothreonine. Positions 434–459 (IREKDEELRRMQEMLHKIQRQMKETH) form a coiled coil.

The protein belongs to the TRAFAC class TrmE-Era-EngA-EngB-Septin-like GTPase superfamily. Septin GTPase family. In terms of assembly, septins polymerize into heterooligomeric protein complexes that form filaments, and can associate with cellular membranes, actin filaments and microtubules. GTPase activity is required for filament formation. Interacts with SEPTIN8. Component of a septin core octameric complex consisting of SEPTIN12, SEPTIN7, SEPTIN6 and SEPTIN2 or SEPTIN4 in the order 12-7-6-2-2-6-7-12 or 12-7-6-4-4-6-7-12. Interacts with SEPTIN14 (via C-terminus). Interacts with DYRK1A. Interacts with SLC6A3/DAT and SNCA/alpha-synuclein. Interacts with STX1A; in the striatum. Interacts with XIAP (via BIR3 domain) following the induction of apoptosis. Interacts with AREL1 (via HECT domain); in the cytoplasm following induction of apoptosis. Phosphorylated by DYRK1A.

It is found in the cytoplasm. The protein resides in the cell projection. Its subcellular location is the cilium. The protein localises to the flagellum. It localises to the cytoplasmic vesicle. It is found in the secretory vesicle. The protein resides in the axon. Its subcellular location is the dendrite. The protein localises to the perikaryon. Its function is as follows. Filament-forming cytoskeletal GTPase. Pro-apoptotic protein involved in LGR5-positive intestinal stem cell and Paneth cell expansion in the intestines, via its interaction with XIAP. May also play a role in the regulation of cell fate in the intestine. Positive regulator of apoptosis involved in hematopoietic stem cell homeostasis; via its interaction with XIAP. Negative regulator of repair and hair follicle regeneration in response to injury, due to inhibition of hair follicle stem cell proliferation, potentially via its interaction with XIAP. Plays an important role in male fertility and sperm motility. During spermiogenesis, essential for the establishment of the annulus (a fibrous ring structure connecting the midpiece and the principal piece of the sperm flagellum) which is a requisite for the structural and mechanical integrity of the sperm. Involved in the migration of cortical neurons and the formation of neuron leading processes during embryonic development. Required for dopaminergic metabolism in presynaptic autoreceptors; potentially via activity as a presynaptic scaffold protein. This is Septin-4 from Rattus norvegicus (Rat).